Here is a 693-residue protein sequence, read N- to C-terminus: E3 ubiquitin-protein ligase MARCHF7 (693 aa).

N-acetylmethionine is present on Met-1. 7 disordered regions span residues 1-43, 69-136, 158-281, 296-342, 361-430, 445-475, and 512-533; these read MESK…RDSS, ESEI…LGSF, LMDY…RRTT, FFSR…EGRA, LSQN…RDSN, AANR…RNPG, and WNST…PEKL. Polar residues-rich tracts occupy residues 14–36, 95–105, 112–132, 167–184, and 192–215; these read VQPS…LNDS, SCTNCASTSAG, LNTV…SSMV, DFTT…SYSQ, and AVST…QTVP. Over residues 216-234 the composition is skewed to low complexity; sequence SSRDSSRSSFRSHFSPRQS. The span at 236-267 shows a compositional bias: polar residues; the sequence is SFRNSSHPAFSYFSSRNETPTISNSERGSSQR. Basic and acidic residues predominate over residues 268–279; that stretch reads PYRESSDNEGRR. Residues 296–305 show a composition bias toward low complexity; that stretch reads FFSRRSSQDS. Over residues 306-323 the composition is skewed to polar residues; that stretch reads LNTRSLSSENYISPRTLT. Ser-318 is subject to Phosphoserine. Residues 324 to 337 show a composition bias toward low complexity; the sequence is SQSRNNGTSSSSDV. Residue Ser-390 is modified to Phosphoserine. Positions 451 to 463 are enriched in low complexity; it reads ASGASSSAAAGGS. Positions 517 to 533 are enriched in basic and acidic residues; the sequence is GKNDKAKSAPSRDPEKL. The RING-CH-type zinc-finger motif lies at 546 to 616; the sequence is DDEEEGDLCR…ELCKEKLQLN (71 aa). 8 residues coordinate Zn(2+): Cys-554, Cys-557, Cys-572, Cys-574, His-582, Cys-585, Cys-606, and Cys-609. At Thr-688 the chain carries Phosphothreonine. Ser-689 carries the post-translational modification Phosphoserine.

In terms of tissue distribution, expressed in brain, thymus, muscle and kidney.

It localises to the cytoplasm. The catalysed reaction is S-ubiquitinyl-[E2 ubiquitin-conjugating enzyme]-L-cysteine + [acceptor protein]-L-lysine = [E2 ubiquitin-conjugating enzyme]-L-cysteine + N(6)-ubiquitinyl-[acceptor protein]-L-lysine.. It participates in protein modification; protein ubiquitination. In terms of biological role, E3 ubiquitin-protein ligase which may specifically enhance the E2 activity of HIP2. E3 ubiquitin ligases accept ubiquitin from an E2 ubiquitin-conjugating enzyme in the form of a thioester and then directly transfer the ubiquitin to targeted substrates. May be involved in T-cell proliferation by regulating LIF secretion. May play a role in lysosome homeostasis. Promotes 'Lys-6', 'Lys-11' and 'Lys-63'-linked mixed polyubiquitination on ATG14 leading to the inhibition of autophagy by impairing the interaction between ATG14 and STX7. Participates in the dopamine-mediated negative regulation of the NLRP3 inflammasome by promoting its uibiquitination and subsequent degradation. The sequence is that of E3 ubiquitin-protein ligase MARCHF7 (Marchf7) from Mus musculus (Mouse).